A 129-amino-acid polypeptide reads, in one-letter code: Large ribosomal subunit protein bL12 (129 aa).

This sequence belongs to the bacterial ribosomal protein bL12 family. In terms of assembly, homodimer. Part of the ribosomal stalk of the 50S ribosomal subunit. Forms a multimeric L10(L12)X complex, where L10 forms an elongated spine to which 2 to 4 L12 dimers bind in a sequential fashion. Binds GTP-bound translation factors.

Its function is as follows. Forms part of the ribosomal stalk which helps the ribosome interact with GTP-bound translation factors. Is thus essential for accurate translation. The protein is Large ribosomal subunit protein bL12 of Photobacterium profundum (strain SS9).